A 1389-amino-acid polypeptide reads, in one-letter code: DNA-directed RNA polymerase subunit beta' (1389 aa).

Residues cysteine 73, cysteine 75, cysteine 88, and cysteine 91 each coordinate Zn(2+). Positions 464, 466, and 468 each coordinate Mg(2+). Positions 810, 884, 891, and 894 each coordinate Zn(2+).

The protein belongs to the RNA polymerase beta' chain family. In terms of assembly, the RNAP catalytic core consists of 2 alpha, 1 beta, 1 beta' and 1 omega subunit. When a sigma factor is associated with the core the holoenzyme is formed, which can initiate transcription. Requires Mg(2+) as cofactor. Zn(2+) serves as cofactor.

It catalyses the reaction RNA(n) + a ribonucleoside 5'-triphosphate = RNA(n+1) + diphosphate. Its function is as follows. DNA-dependent RNA polymerase catalyzes the transcription of DNA into RNA using the four ribonucleoside triphosphates as substrates. The polypeptide is DNA-directed RNA polymerase subunit beta' (Pelagibacter ubique (strain HTCC1062)).